We begin with the raw amino-acid sequence, 164 residues long: Large ribosomal subunit protein uL15 (164 aa).

The span at 1–33 (MTSKKRRQRGSRTHGGGTHKNRRGAGHRGGRGR) shows a compositional bias: basic residues. Disordered stretches follow at residues 1–59 (MTSK…PGAE) and 137–164 (AGGS…NDEN). Residues 34-43 (AGRDKHEQHN) show a composition bias toward basic and acidic residues. Residues 153–164 (GEDEEPNSNDEN) are compositionally biased toward acidic residues.

The protein belongs to the universal ribosomal protein uL15 family. As to quaternary structure, part of the 50S ribosomal subunit.

Binds to the 23S rRNA. This Haloquadratum walsbyi (strain DSM 16790 / HBSQ001) protein is Large ribosomal subunit protein uL15.